The sequence spans 187 residues: CASP-like protein SELMODRAFT_416718 (187 aa).

A helical transmembrane segment spans residues 1-21 (MMFGGVGMATLPLSLIFAFKN). The Extracellular portion of the chain corresponds to 22 to 100 (RPKCVITRAQ…EAFPQGEKAD (79 aa)). The chain crosses the membrane as a helical span at residues 101–119 (TSWALTVLFYLAKLVFGIL). Residues 120-125 (GLALSV) are Cytoplasmic-facing. The chain crosses the membrane as a helical span at residues 126–145 (IWLLHIIVFMLVNPPAFPFL). Over 146–155 (NQVFIQLDSA) the chain is Extracellular. A helical transmembrane segment spans residues 156 to 176 (WGLLGTTAFAIFCYYLVMSVI). The Cytoplasmic segment spans residues 177–187 (SGEMHSIYPMK).

This sequence belongs to the Casparian strip membrane proteins (CASP) family. Homodimer and heterodimers.

It localises to the cell membrane. This is CASP-like protein SELMODRAFT_416718 from Selaginella moellendorffii (Spikemoss).